The primary structure comprises 537 residues: Exoglucanase 1 (537 aa).

Residues 1 to 18 (MKGSISYQIYKGALLLSA) form the signal peptide. The tract at residues 19–453 (LLNSVSAQQV…YVIYSNIKTG (435 aa)) is catalytic. N-linked (GlcNAc...) asparagine glycosylation occurs at asparagine 136. The active-site Nucleophile is the glutamate 235. The active-site Proton donor is the glutamate 240. N-linked (GlcNAc...) asparagine glycosylation is found at asparagine 414 and asparagine 456. Positions 454 to 477 (PLNSTFTGGTTSSSSTTTTTSKST) are linker. A compositionally biased stretch (low complexity) spans 458–502 (TFTGGTTSSSSTTTTTSKSTSTSSSSKTTTTVTTTTTSSGSSGTG). Residues 458 to 503 (TFTGGTTSSSSTTTTTSKSTSTSSSSKTTTTVTTTTTSSGSSGTGA) form a disordered region. A CBM1 domain is found at 501–537 (TGARDWAQCGGNGWTGPTTCVSPYTCTKQNDWYSQCL). Cystine bridges form between cysteine 509–cysteine 526 and cysteine 520–cysteine 536.

This sequence belongs to the glycosyl hydrolase 7 (cellulase C) family.

The protein resides in the secreted. The catalysed reaction is Hydrolysis of (1-&gt;4)-beta-D-glucosidic linkages in cellulose and cellotetraose, releasing cellobiose from the non-reducing ends of the chains.. The chain is Exoglucanase 1 (cbh1) from Penicillium janthinellum (Penicillium vitale).